The chain runs to 1225 residues: Cohesin subunit SA-3 (1225 aa).

Positions 1-97 are disordered; it reads MSSPLQRAVG…HSRKQSEPPA (97 aa). The segment covering 15–26 has biased composition (low complexity); it reads ALSASSSSSASL. Over residues 45–54 the composition is skewed to acidic residues; it reads LADEDTDFED. 2 stretches are compositionally biased toward basic residues: residues 59–69 and 76–90; these read NVKKRAAKRPP and KHPK…RHSR. An SCD domain is found at 309–394; sequence FVHRYRDVLP…SRFKDRMVSM (86 aa). Disordered regions lie at residues 546–567, 1063–1113, and 1177–1225; these read SEGH…KERK, AETS…STAV, and EEDE…IEDF. The span at 1078-1089 shows a compositional bias: basic and acidic residues; sequence VEGPAKPNREDV. Residues 1090-1099 are compositionally biased toward low complexity; the sequence is SSSQEESLQL. The span at 1177-1191 shows a compositional bias: acidic residues; it reads EEDEEEELEIQDESN. The segment covering 1198-1209 has biased composition (polar residues); sequence DMQASSYSSTSE. At Ser1203 the chain carries Phosphoserine. A compositionally biased stretch (acidic residues) spans 1216 to 1225; sequence DSTELDIEDF.

This sequence belongs to the SCC3 family. Component of the meiosis-specific cohesin complex, which also contains the SMC1 (SMC1A or SMC1B) and SMC3 heterodimer. Such complex likely contains RAD21, or the meiosis-specific related protein REC8. Interacts with CCDC79/TERB1; recruiting cohesin to telomeres to develop structural rigidity. In terms of processing, phosphorylated. In terms of tissue distribution, testis specific.

It is found in the nucleus. The protein resides in the chromosome. It localises to the centromere. Functionally, meiosis specific component of cohesin complex. The cohesin complex is required for the cohesion of sister chromatids after DNA replication. The cohesin complex apparently forms a large proteinaceous ring within which sister chromatids can be trapped. At anaphase, the complex is cleaved and dissociates from chromatin, allowing sister chromatids to segregate. The meiosis-specific cohesin complex probably replaces mitosis specific cohesin complex when it dissociates from chromatin during prophase I. This Homo sapiens (Human) protein is Cohesin subunit SA-3 (STAG3).